Consider the following 315-residue polypeptide: Pantothenate kinase (315 aa).

94-101 (GSVAVGKS) is an ATP binding site.

Belongs to the prokaryotic pantothenate kinase family.

The protein resides in the cytoplasm. The enzyme catalyses (R)-pantothenate + ATP = (R)-4'-phosphopantothenate + ADP + H(+). It functions in the pathway cofactor biosynthesis; coenzyme A biosynthesis; CoA from (R)-pantothenate: step 1/5. In Shewanella amazonensis (strain ATCC BAA-1098 / SB2B), this protein is Pantothenate kinase.